A 78-amino-acid chain; its full sequence is Large ribosomal subunit protein bL28 (78 aa).

Residues 1-20 (MSRVCQVTGKRPVTGNNRSH) form a disordered region.

This sequence belongs to the bacterial ribosomal protein bL28 family.

The protein is Large ribosomal subunit protein bL28 of Vibrio atlanticus (strain LGP32) (Vibrio splendidus (strain Mel32)).